A 695-amino-acid polypeptide reads, in one-letter code: Threonine--tRNA ligase (695 aa).

The TGS domain occupies 1–66 (MSAPARPAPA…DTDVEVTPVA (66 aa)). Residues 263–569 (DHRKLGVELD…LTEHYAGAFP (307 aa)) form a catalytic region. Residues Cys368, His419, and His546 each coordinate Zn(2+).

It belongs to the class-II aminoacyl-tRNA synthetase family. As to quaternary structure, homodimer. The cofactor is Zn(2+).

The protein resides in the cytoplasm. The catalysed reaction is tRNA(Thr) + L-threonine + ATP = L-threonyl-tRNA(Thr) + AMP + diphosphate + H(+). In terms of biological role, catalyzes the attachment of threonine to tRNA(Thr) in a two-step reaction: L-threonine is first activated by ATP to form Thr-AMP and then transferred to the acceptor end of tRNA(Thr). Also edits incorrectly charged L-seryl-tRNA(Thr). This chain is Threonine--tRNA ligase, found in Mycolicibacterium gilvum (strain PYR-GCK) (Mycobacterium gilvum (strain PYR-GCK)).